The primary structure comprises 330 residues: Virulence plasmid integrase pGP8-D (330 aa).

One can recognise a Core-binding (CB) domain in the interval 39–124 (FSLFEVIMHW…SYISLTRFLN (86 aa)). The 176-residue stretch at 152–327 (VKTNAMNRLQ…SREDNASKKM (176 aa)) folds into the Tyr recombinase domain. Residues arginine 189, lysine 214, histidine 279, arginine 282, and histidine 305 contribute to the active site. Tyrosine 314 acts as the O-(3'-phospho-DNA)-tyrosine intermediate in catalysis.

Belongs to the 'phage' integrase family.

The chain is Virulence plasmid integrase pGP8-D from Chlamydia muridarum (strain MoPn / Nigg).